The primary structure comprises 163 residues: Photosystem II extrinsic protein V (163 aa).

The N-terminal stretch at 1–26 (MFRRLIGVVVATVLLTFQLIVGSATA) is a signal peptide. Residues Cys63, Cys66, His67, and His118 each contribute to the heme c site.

Belongs to the cytochrome c family. PsbV subfamily. In terms of assembly, PSII is composed of 1 copy each of membrane proteins PsbA, PsbB, PsbC, PsbD, PsbE, PsbF, PsbH, PsbI, PsbJ, PsbK, PsbL, PsbM, PsbT, PsbX, PsbY, PsbZ, Psb30/Ycf12, peripheral proteins PsbO, CyanoQ (PsbQ), PsbU, PsbV and a large number of cofactors. It forms dimeric complexes. Heme c serves as cofactor.

Its subcellular location is the cellular thylakoid membrane. Its function is as follows. One of the extrinsic, lumenal subunits of photosystem II (PSII). PSII is a light-driven water plastoquinone oxidoreductase, using light energy to abstract electrons from H(2)O, generating a proton gradient subsequently used for ATP formation. The extrinsic proteins stabilize the structure of photosystem II oxygen-evolving complex (OEC), the ion environment of oxygen evolution and protect the OEC against heat-induced inactivation. Low-potential cytochrome c that plays a role in the OEC of PSII. The protein is Photosystem II extrinsic protein V of Trichormus variabilis (strain ATCC 29413 / PCC 7937) (Anabaena variabilis).